An 85-amino-acid polypeptide reads, in one-letter code: ATP synthase subunit c (85 aa).

A run of 2 helical transmembrane segments spans residues 10 to 30 (IAVA…FAVL) and 53 to 73 (FIIA…ALLF).

Belongs to the ATPase C chain family. F-type ATPases have 2 components, F(1) - the catalytic core - and F(0) - the membrane proton channel. F(1) has five subunits: alpha(3), beta(3), gamma(1), delta(1), epsilon(1). F(0) has three main subunits: a(1), b(2) and c(10-14). The alpha and beta chains form an alternating ring which encloses part of the gamma chain. F(1) is attached to F(0) by a central stalk formed by the gamma and epsilon chains, while a peripheral stalk is formed by the delta and b chains.

The protein resides in the cell inner membrane. In terms of biological role, f(1)F(0) ATP synthase produces ATP from ADP in the presence of a proton or sodium gradient. F-type ATPases consist of two structural domains, F(1) containing the extramembraneous catalytic core and F(0) containing the membrane proton channel, linked together by a central stalk and a peripheral stalk. During catalysis, ATP synthesis in the catalytic domain of F(1) is coupled via a rotary mechanism of the central stalk subunits to proton translocation. Its function is as follows. Key component of the F(0) channel; it plays a direct role in translocation across the membrane. A homomeric c-ring of between 10-14 subunits forms the central stalk rotor element with the F(1) delta and epsilon subunits. In Vibrio vulnificus (strain CMCP6), this protein is ATP synthase subunit c.